The primary structure comprises 866 residues: Leucine--tRNA ligase (866 aa).

Residues 59–69 (PYPSGDLHMGH) carry the 'HIGH' region motif. Positions 393–421 (VPVIKTDPQTGEPLLPESAPLESPAETGQ) are disordered. Over residues 404 to 418 (EPLLPESAPLESPAE) the composition is skewed to low complexity. The 'KMSKS' region motif lies at 628–632 (AMSKS). ATP is bound at residue Lys631.

It belongs to the class-I aminoacyl-tRNA synthetase family.

It is found in the cytoplasm. It catalyses the reaction tRNA(Leu) + L-leucine + ATP = L-leucyl-tRNA(Leu) + AMP + diphosphate. In Leifsonia xyli subsp. xyli (strain CTCB07), this protein is Leucine--tRNA ligase.